Consider the following 487-residue polypeptide: N-succinylglutamate 5-semialdehyde dehydrogenase (487 aa).

221 to 226 lines the NAD(+) pocket; that stretch reads GSSDTG. Residues Glu-244 and Cys-278 contribute to the active site.

This sequence belongs to the aldehyde dehydrogenase family. AstD subfamily.

It carries out the reaction N-succinyl-L-glutamate 5-semialdehyde + NAD(+) + H2O = N-succinyl-L-glutamate + NADH + 2 H(+). It participates in amino-acid degradation; L-arginine degradation via AST pathway; L-glutamate and succinate from L-arginine: step 4/5. In terms of biological role, catalyzes the NAD-dependent reduction of succinylglutamate semialdehyde into succinylglutamate. The protein is N-succinylglutamate 5-semialdehyde dehydrogenase of Burkholderia pseudomallei (strain 1106a).